We begin with the raw amino-acid sequence, 215 residues long: Dual specificity phosphatase 29 (215 aa).

In terms of domain architecture, Tyrosine-protein phosphatase spans 53–201; the sequence is HVNEVWPRLH…LRELDKQLVK (149 aa). 145 to 152 provides a ligand contact to substrate; the sequence is HCAMGRSR. Cysteine 146 functions as the Phosphocysteine intermediate in the catalytic mechanism.

It belongs to the protein-tyrosine phosphatase family. Non-receptor class dual specificity subfamily. Homodimer. Interacts with PRKAA2. In terms of tissue distribution, skeletal muscle, liver and adipose tissue.

The protein localises to the cytoplasm. It localises to the nucleus. The catalysed reaction is O-phospho-L-tyrosyl-[protein] + H2O = L-tyrosyl-[protein] + phosphate. The enzyme catalyses O-phospho-L-seryl-[protein] + H2O = L-seryl-[protein] + phosphate. It carries out the reaction O-phospho-L-threonyl-[protein] + H2O = L-threonyl-[protein] + phosphate. Functionally, dual specificity phosphatase able to dephosphorylate phosphotyrosine, phosphoserine and phosphothreonine residues within the same substrate, with a preference for phosphotyrosine as a substrate. Involved in the modulation of intracellular signaling cascades. In skeletal muscle regulates systemic glucose homeostasis by activating, AMPK, an energy sensor protein kinase. Affects MAP kinase signaling though modulation of the MAPK1/2 cascade in skeletal muscle promoting muscle cell differentiation, development and atrophy. The protein is Dual specificity phosphatase 29 of Mus musculus (Mouse).